The primary structure comprises 1199 residues: DNA polymerase beta (1199 aa).

The protein belongs to the DNA polymerase type-B family.

It catalyses the reaction DNA(n) + a 2'-deoxyribonucleoside 5'-triphosphate = DNA(n+1) + diphosphate. DNA-directed DNA polymerase involved in viral DNA replication. This Ornithodoros (relapsing fever ticks) protein is DNA polymerase beta.